A 109-amino-acid chain; its full sequence is Ribulose bisphosphate carboxylase small subunit (109 aa).

Belongs to the RuBisCO small chain family. Heterohexadecamer of 8 large and 8 small subunits. Forms complexes of many stoichiometries with Raf1 and RbcL.

It localises to the carboxysome. In terms of biological role, ruBisCO catalyzes two reactions: the carboxylation of D-ribulose 1,5-bisphosphate, the primary event in carbon dioxide fixation, as well as the oxidative fragmentation of the pentose substrate in the photorespiration process. Both reactions occur simultaneously and in competition at the same active site. Although the small subunit is not catalytic it is essential for maximal activity. The polypeptide is Ribulose bisphosphate carboxylase small subunit (Nostoc sp. (strain PCC 7120 / SAG 25.82 / UTEX 2576)).